Reading from the N-terminus, the 159-residue chain is 2-C-methyl-D-erythritol 2,4-cyclodiphosphate synthase (159 aa).

Residues Asp10 and His12 each coordinate a divalent metal cation. 4-CDP-2-C-methyl-D-erythritol 2-phosphate is bound by residues 10–12 (DVH) and 36–37 (HS). His44 contacts a divalent metal cation. 4-CDP-2-C-methyl-D-erythritol 2-phosphate is bound by residues 58–60 (DIG), 134–137 (TTTE), Phe141, and Arg144.

Belongs to the IspF family. As to quaternary structure, homotrimer. The cofactor is a divalent metal cation.

The enzyme catalyses 4-CDP-2-C-methyl-D-erythritol 2-phosphate = 2-C-methyl-D-erythritol 2,4-cyclic diphosphate + CMP. The protein operates within isoprenoid biosynthesis; isopentenyl diphosphate biosynthesis via DXP pathway; isopentenyl diphosphate from 1-deoxy-D-xylulose 5-phosphate: step 4/6. Its function is as follows. Involved in the biosynthesis of isopentenyl diphosphate (IPP) and dimethylallyl diphosphate (DMAPP), two major building blocks of isoprenoid compounds. Catalyzes the conversion of 4-diphosphocytidyl-2-C-methyl-D-erythritol 2-phosphate (CDP-ME2P) to 2-C-methyl-D-erythritol 2,4-cyclodiphosphate (ME-CPP) with a corresponding release of cytidine 5-monophosphate (CMP). The protein is 2-C-methyl-D-erythritol 2,4-cyclodiphosphate synthase of Bacteroides fragilis (strain YCH46).